The sequence spans 327 residues: ATP-dependent 6-phosphofructokinase (327 aa).

Gly12 is an ATP binding site. ADP contacts are provided by residues 22 to 26 and 55 to 60; these read RGVVR and RYSVSD. ATP contacts are provided by residues 73 to 74 and 103 to 106; these read RF and GDGS. Asp104 is a binding site for Mg(2+). Residue 127 to 129 coordinates substrate; it reads TID. Residue Asp129 is the Proton acceptor of the active site. Arg156 is a binding site for ADP. Substrate contacts are provided by residues Arg164 and 171–173; that span reads MGR. ADP contacts are provided by residues 187–189, Lys213, and 215–217; these read GCE and KKH. Residues Glu224, Arg245, and 251–254 each bind substrate; that span reads HIQR.

This sequence belongs to the phosphofructokinase type A (PFKA) family. ATP-dependent PFK group I subfamily. Prokaryotic clade 'B1' sub-subfamily. As to quaternary structure, homotetramer. The cofactor is Mg(2+).

It localises to the cytoplasm. The enzyme catalyses beta-D-fructose 6-phosphate + ATP = beta-D-fructose 1,6-bisphosphate + ADP + H(+). Its pathway is carbohydrate degradation; glycolysis; D-glyceraldehyde 3-phosphate and glycerone phosphate from D-glucose: step 3/4. Allosterically activated by ADP and other diphosphonucleosides, and allosterically inhibited by phosphoenolpyruvate. Catalyzes the phosphorylation of D-fructose 6-phosphate to fructose 1,6-bisphosphate by ATP, the first committing step of glycolysis. This chain is ATP-dependent 6-phosphofructokinase, found in Yersinia pseudotuberculosis serotype IB (strain PB1/+).